A 357-amino-acid polypeptide reads, in one-letter code: Homoserine O-acetyltransferase (357 aa).

An AB hydrolase-1 domain is found at 51–340 (NVIVICHALT…EPYGHDAFLI (290 aa)). S147 functions as the Nucleophile in the catalytic mechanism. R216 provides a ligand contact to substrate. Active-site residues include D306 and H335. D336 contributes to the substrate binding site.

It belongs to the AB hydrolase superfamily. MetX family. As to quaternary structure, homodimer.

It is found in the cytoplasm. The enzyme catalyses L-homoserine + acetyl-CoA = O-acetyl-L-homoserine + CoA. The protein operates within amino-acid biosynthesis; L-methionine biosynthesis via de novo pathway; O-acetyl-L-homoserine from L-homoserine: step 1/1. Its function is as follows. Transfers an acetyl group from acetyl-CoA to L-homoserine, forming acetyl-L-homoserine. The protein is Homoserine O-acetyltransferase of Chlorobium chlorochromatii (strain CaD3).